Reading from the N-terminus, the 207-residue chain is Ras-related protein Rab-7a (207 aa).

N-acetylthreonine is present on Thr-2. 11 residues coordinate GTP: Ser-17, Gly-18, Val-19, Gly-20, Lys-21, Thr-22, Ser-23, Ser-34, Asn-35, Tyr-37, and Thr-40. Thr-22 serves as a coordination point for Mg(2+). The Switch 1 signature appears at 28–41; the sequence is YVNKKFSNQYKATI. The Mg(2+) site is built by Thr-40 and Asp-63. Residue Gly-66 coordinates GTP. The Switch 2 signature appears at 67 to 82; that stretch reads QERFQSLGVAFYRGAD. The residue at position 72 (Ser-72) is a Phosphoserine. GTP is bound by residues Asn-125, Lys-126, Asp-128, Ala-156, and Lys-157. Residues Lys-191 and Lys-194 each participate in a glycyl lysine isopeptide (Lys-Gly) (interchain with G-Cter in ubiquitin) cross-link. Residues Cys-205 and Cys-207 are each lipidated (S-geranylgeranyl cysteine). The residue at position 207 (Cys-207) is a Cysteine methyl ester.

The protein belongs to the small GTPase superfamily. Rab family. In terms of assembly, interacts with NTRK1/TRKA. Interacts with RILP. Interacts with PSMA7. Interacts with RNF115. Interacts with and FYCO1. Interacts with the PIK3C3/VPS34-PIK3R4 complex. The GTP-bound form interacts with OSBPL1A. The GTP-bound form interacts with RAC1. Interacts with CLN3. Interacts with CHM, the substrate-binding subunit of the Rab geranylgeranyltransferase complex. Interacts with C9orf72. Does not interact with HPS4 and the BLOC-3 complex (heterodimer of HPS1 and HPS4). Interacts with CLN5. Interacts with PLEKHM1 (via N- and C-terminus). Interacts with PRPH; the interaction is direct. Interacts with VPS13A. The GDP-bound form interacts with RIMOC1. Interacts with the MON1A-CCZ1B complex and this interaction is enhanced in the presence of RIMOC1. Interacts with VPS39 and VPS41. Forms a ternary complex with LAMP2 and RUFY4; the interaction with LAMP2 is mediated by RUFY4 (via RUN and coiled coil domains). It depends on Mg(2+) as a cofactor. Deubiquitination at Lys-191 and Lys-194 by USP32. Post-translationally, phosphorylated at Ser-72 by LRRK1; phosphorylation is dependent on protein kinase C (PKC) activation of LRRK1. In terms of processing, prenylated. Prenylation is required for association with cellular membranes. As to expression, expressed in osteoclasts and in neurons.

The protein localises to the cytoplasmic vesicle. The protein resides in the phagosome membrane. Its subcellular location is the late endosome membrane. It localises to the lysosome membrane. It is found in the melanosome membrane. The protein localises to the autophagosome membrane. The protein resides in the lipid droplet. Its subcellular location is the endosome membrane. It localises to the mitochondrion membrane. It catalyses the reaction GTP + H2O = GDP + phosphate + H(+). Regulated by guanine nucleotide exchange factors (GEFs) which promote the exchange of bound GDP for free GTP. Regulated by GTPase activating proteins (GAPs) which increase the GTP hydrolysis activity. Inhibited by GDP dissociation inhibitors (GDIs). In terms of biological role, the small GTPases Rab are key regulators of intracellular membrane trafficking, from the formation of transport vesicles to their fusion with membranes. Rabs cycle between an inactive GDP-bound form and an active GTP-bound form that is able to recruit to membranes different sets of downstream effectors directly responsible for vesicle formation, movement, tethering and fusion. In its active state, RAB7A binds to a variety of effector proteins playing a key role in the regulation of endo-lysosomal trafficking. Governs early-to-late endosomal maturation, microtubule minus-end as well as plus-end directed endosomal migration and positioning, and endosome-lysosome transport through different protein-protein interaction cascades. Also plays a central role in growth-factor-mediated cell signaling, nutrient-transporter-mediated nutrient uptake, neurotrophin transport in the axons of neurons and lipid metabolism. Also involved in regulation of some specialized endosomal membrane trafficking, such as maturation of melanosomes, pathogen-induced phagosomes (or vacuoles) and autophagosomes. Plays a role in the maturation and acidification of phagosomes that engulf pathogens, such as S.aureus and Mycobacteria. Plays a role in the fusion of phagosomes with lysosomes. In concert with RAC1, plays a role in regulating the formation of RBs (ruffled borders) in osteoclasts. Controls the endosomal trafficking and neurite outgrowth signaling of NTRK1/TRKA. Regulates the endocytic trafficking of the EGF-EGFR complex by regulating its lysosomal degradation. Involved in the ADRB2-stimulated lipolysis through lipophagy, a cytosolic lipase-independent autophagic pathway. Required for the exosomal release of SDCBP, CD63 and syndecan. Required for vesicular trafficking and cell surface expression of ACE2. May play a role in PRPH neuronal intermediate filament assembly. This is Ras-related protein Rab-7a from Rattus norvegicus (Rat).